The following is a 201-amino-acid chain: ADP-ribosylation factor-related protein 1 (201 aa).

M1 carries the N-acetylmethionine modification. GTP-binding positions include 24–31 (GLDNAGKT), 75–79 (DLGGQ), and 134–137 (NKQD).

The protein belongs to the small GTPase superfamily. Arf family. In terms of assembly, interacts with SYS1.

Its subcellular location is the golgi apparatus. It is found in the trans-Golgi network. Trans-Golgi-associated GTPase that regulates protein sorting. Controls the targeting of ARL1 and its effector to the trans-Golgi. Required for the lipidation of chylomicrons in the intestine and required for VLDL lipidation in the liver. This Mus musculus (Mouse) protein is ADP-ribosylation factor-related protein 1 (Arfrp1).